Reading from the N-terminus, the 74-residue chain is Anionic peptide clone 9 (74 aa).

The signal sequence occupies residues 1–24 (MVSKSLIVLLLVSVLVSTFFTTEA).

This sequence belongs to the non-disulfide-bridged peptide (NDBP) superfamily. Long chain multifunctional peptide (group 2) family. Expressed by the venom gland.

The protein resides in the secreted. In terms of biological role, may be an antimicrobial peptide. In Tityus costatus (Brazilian scorpion), this protein is Anionic peptide clone 9.